The following is a 120-amino-acid chain: UPF0231 protein KPK_4613 (120 aa).

It belongs to the UPF0231 family.

The polypeptide is UPF0231 protein KPK_4613 (Klebsiella pneumoniae (strain 342)).